The chain runs to 256 residues: 3-isopropylmalate dehydratase small subunit 2 (256 aa).

The N-terminal 59 residues, 1–59 (MAYSLPTFPQALPCSSTKTSSSLATFRSPFLRFNGSTSLIPSSISITSRGTSSPTIIPR), are a transit peptide targeting the chloroplast.

Belongs to the LeuD family. In terms of assembly, heterodimer of the large LEUC/IIL1 subunit and the small LEUD (SSU1, SSU2 or SSU3) subunits. In terms of tissue distribution, expressed in vascular bundles of roots, cotyledons and rosette leaves. Expressed in stem vascular bundles which branche off into lateral inflorescences. Expressed in connective tissues in anthers. In young seedlings, expressed in cotyledon epidermal cells and vasculare bundles. In hypocotyls, expressed in parenchyma cells surrounding the vasculature and further peripheral cells. In seedling roots, expressed in cells along the vasculature. In roots of adult plants, expressed in cells closely associated with the stele. In flowering stalks, expressed in parenchyma cells associated with the phloem or the xylem. Expressed in the vasculature of sepals and petals.

The protein resides in the plastid. The protein localises to the chloroplast stroma. It carries out the reaction (2R,3S)-3-isopropylmalate = (2S)-2-isopropylmalate. The enzyme catalyses a 2-(omega-methylsulfanyl)alkylmalate = a 2-(omega-methylsulfanyl)alkylmaleate + H2O. The catalysed reaction is 2-(3-methylsulfanyl)propylmalate = 2-(2-methylsulfanyl)propylmaleate + H2O. It catalyses the reaction a 3-(omega-methylsulfanyl)alkylmalate = a 2-(omega-methylsulfanyl)alkylmaleate + H2O. It carries out the reaction 2-(2-methylsulfanyl)ethylmalate = 2-(2-methylsulfanyl)ethylmaleate + H2O. The enzyme catalyses 3-(2-methylsulfanyl)ethylmalate = 2-(2-methylsulfanyl)ethylmaleate + H2O. The catalysed reaction is 3-(3-methylsulfanyl)propylmalate = 2-(2-methylsulfanyl)propylmaleate + H2O. The protein operates within amino-acid biosynthesis; L-leucine biosynthesis; L-leucine from 3-methyl-2-oxobutanoate: step 2/4. Catalyzes the isomerization between 2-isopropylmalate and 3-isopropylmalate, via the formation of 2-isopropylmaleate. Functions redundantly with LEUD2 in the methionine chain elongation pathway of aliphatic glucosinolate formation. The sequence is that of 3-isopropylmalate dehydratase small subunit 2 from Arabidopsis thaliana (Mouse-ear cress).